The sequence spans 569 residues: Retrotransposon Gag-like protein 5 (569 aa).

Disordered stretches follow at residues 115–151 and 323–506; these read DGPA…LERP and RNII…PSRR. Pro residues predominate over residues 117 to 146; it reads PADPPLLPIPPPPALPPPASKEPPPQPPLA. Residues 334 to 350 show a composition bias toward acidic residues; it reads NEEESEDEEYYSEDEDQ. Over residues 353-367 the composition is skewed to basic residues; it reads RRHRLHSKDQRKRMR. Basic and acidic residues-rich tracts occupy residues 372–392 and 401–415; these read EMKE…KKEE and MKQK…NKNE. 2 stretches are compositionally biased toward acidic residues: residues 416-429 and 443-469; these read EEGE…EDED and GTEE…ELME. Positions 476–485 are enriched in polar residues; that stretch reads HASSQTSGPT.

In Homo sapiens (Human), this protein is Retrotransposon Gag-like protein 5.